Reading from the N-terminus, the 270-residue chain is Malonyl-[acyl-carrier protein] O-methyltransferase (270 aa).

Belongs to the methyltransferase superfamily.

It catalyses the reaction malonyl-[ACP] + S-adenosyl-L-methionine = malonyl-[ACP] methyl ester + S-adenosyl-L-homocysteine. It participates in cofactor biosynthesis; biotin biosynthesis. In terms of biological role, converts the free carboxyl group of a malonyl-thioester to its methyl ester by transfer of a methyl group from S-adenosyl-L-methionine (SAM). It allows to synthesize pimeloyl-ACP via the fatty acid synthetic pathway. This Marinomonas sp. (strain MWYL1) protein is Malonyl-[acyl-carrier protein] O-methyltransferase.